We begin with the raw amino-acid sequence, 253 residues long: Large ribosomal subunit protein uL4 (253 aa).

The segment at 61–107 is disordered; the sequence is GWGSGRGTSHVPRLVNSSRAARVPHARGGRRAHPPKPEADRSEKVNT. Residues 82–94 are compositionally biased toward basic residues; it reads RVPHARGGRRAHP. Over residues 95–107 the composition is skewed to basic and acidic residues; sequence PKPEADRSEKVNT.

The protein belongs to the universal ribosomal protein uL4 family. As to quaternary structure, part of the 50S ribosomal subunit.

In terms of biological role, one of the primary rRNA binding proteins, this protein initially binds near the 5'-end of the 23S rRNA. It is important during the early stages of 50S assembly. It makes multiple contacts with different domains of the 23S rRNA in the assembled 50S subunit and ribosome. Forms part of the polypeptide exit tunnel. This chain is Large ribosomal subunit protein uL4, found in Methanosarcina barkeri (strain Fusaro / DSM 804).